Reading from the N-terminus, the 154-residue chain is Myoglobin (154 aa).

One can recognise a Globin domain in the interval 2-148 (VLSDAEWHLV…FRKDIAAKYK (147 aa)). Residue S4 is modified to Phosphoserine. H65 contributes to the nitrite binding site. An O2-binding site is contributed by H65. A Phosphothreonine modification is found at T68. H94 contributes to the heme b binding site.

It belongs to the globin family. Monomeric.

It localises to the cytoplasm. The protein localises to the sarcoplasm. It carries out the reaction Fe(III)-heme b-[protein] + nitric oxide + H2O = Fe(II)-heme b-[protein] + nitrite + 2 H(+). The catalysed reaction is H2O2 + AH2 = A + 2 H2O. Monomeric heme protein which primary function is to store oxygen and facilitate its diffusion within muscle tissues. Reversibly binds oxygen through a pentacoordinated heme iron and enables its timely and efficient release as needed during periods of heightened demand. Depending on the oxidative conditions of tissues and cells, and in addition to its ability to bind oxygen, it also has a nitrite reductase activity whereby it regulates the production of bioactive nitric oxide. Under stress conditions, like hypoxia and anoxia, it also protects cells against reactive oxygen species thanks to its pseudoperoxidase activity. This chain is Myoglobin (MB), found in Balaenoptera acutorostrata (Common minke whale).